We begin with the raw amino-acid sequence, 433 residues long: Glutamate-1-semialdehyde 2,1-aminomutase (433 aa).

N6-(pyridoxal phosphate)lysine is present on Lys-271.

The protein belongs to the class-III pyridoxal-phosphate-dependent aminotransferase family. HemL subfamily. Homodimer. Requires pyridoxal 5'-phosphate as cofactor.

Its subcellular location is the cytoplasm. It carries out the reaction (S)-4-amino-5-oxopentanoate = 5-aminolevulinate. It functions in the pathway porphyrin-containing compound metabolism; protoporphyrin-IX biosynthesis; 5-aminolevulinate from L-glutamyl-tRNA(Glu): step 2/2. It participates in porphyrin-containing compound metabolism; chlorophyll biosynthesis. The polypeptide is Glutamate-1-semialdehyde 2,1-aminomutase (Prochlorococcus marinus (strain MIT 9215)).